The chain runs to 135 residues: Agouti-signaling protein (135 aa).

The first 22 residues, 1-22, serve as a signal peptide directing secretion; the sequence is MNILRLLLATLLVCLCLLTAYS. The N-linked (GlcNAc...) asparagine glycan is linked to Asn-39. The tract at residues 56 to 101 is disordered; sequence NKKSKKISRKEAEKKRSSKKKASMKNVAQPRRPRPPPPAPCVATRD. Cystine bridges form between Cys-96–Cys-111, Cys-103–Cys-117, Cys-110–Cys-128, Cys-114–Cys-135, and Cys-119–Cys-126. Positions 96–135 constitute an Agouti domain; it reads CVATRDSCKPPAPACCDPCASCQCRFFRSSCSCRVLNPTC.

It is found in the secreted. Functionally, involved in the regulation of melanogenesis. The binding of ASP to MC1R precludes alpha-MSH initiated signaling and thus blocks production of cAMP, leading to a down-regulation of eumelanogenesis (brown/black pigment) and thus increasing synthesis of pheomelanin (yellow/red pigment). The polypeptide is Agouti-signaling protein (ASIP) (Felis catus (Cat)).